Consider the following 61-residue polypeptide: Small ribosomal subunit protein uS14 (61 aa).

Zn(2+) is bound by residues Cys-24, Cys-27, Cys-40, and Cys-43.

The protein belongs to the universal ribosomal protein uS14 family. Zinc-binding uS14 subfamily. As to quaternary structure, part of the 30S ribosomal subunit. Contacts proteins S3 and S10. Requires Zn(2+) as cofactor.

In terms of biological role, binds 16S rRNA, required for the assembly of 30S particles and may also be responsible for determining the conformation of the 16S rRNA at the A site. The protein is Small ribosomal subunit protein uS14 of Coprothermobacter proteolyticus (strain ATCC 35245 / DSM 5265 / OCM 4 / BT).